The chain runs to 153 residues: Ribosome maturation factor RimP (153 aa).

This sequence belongs to the RimP family.

Its subcellular location is the cytoplasm. Its function is as follows. Required for maturation of 30S ribosomal subunits. The chain is Ribosome maturation factor RimP from Christiangramia forsetii (strain DSM 17595 / CGMCC 1.15422 / KT0803) (Gramella forsetii).